The following is a 137-amino-acid chain: Transcription antitermination protein NusB (137 aa).

The protein belongs to the NusB family.

In terms of biological role, involved in transcription antitermination. Required for transcription of ribosomal RNA (rRNA) genes. Binds specifically to the boxA antiterminator sequence of the ribosomal RNA (rrn) operons. The polypeptide is Transcription antitermination protein NusB (Actinobacillus pleuropneumoniae serotype 5b (strain L20)).